We begin with the raw amino-acid sequence, 341 residues long: L-threonine 3-dehydrogenase (341 aa).

Cys38 is a binding site for Zn(2+). Catalysis depends on charge relay system residues Thr40 and His43. The Zn(2+) site is built by His63, Glu64, Cys93, Cys96, Cys99, and Cys107. NAD(+) is bound by residues Ile175, Asp195, Arg200, Leu262–Ile264, and Ile286–Tyr287.

Belongs to the zinc-containing alcohol dehydrogenase family. In terms of assembly, homotetramer. Zn(2+) is required as a cofactor.

It is found in the cytoplasm. The catalysed reaction is L-threonine + NAD(+) = (2S)-2-amino-3-oxobutanoate + NADH + H(+). The protein operates within amino-acid degradation; L-threonine degradation via oxydo-reductase pathway; glycine from L-threonine: step 1/2. Catalyzes the NAD(+)-dependent oxidation of L-threonine to 2-amino-3-ketobutyrate. This Yersinia pestis bv. Antiqua (strain Antiqua) protein is L-threonine 3-dehydrogenase.